The following is a 1118-amino-acid chain: Carbamoyl phosphate synthase arginine-specific large chain (1118 aa).

A carboxyphosphate synthetic domain region spans residues 23–420 (QLVEGVNSVL…AFQKALRQVD (398 aa)). The ATP site is built by R150, R190, G196, G197, K227, L229, E234, G260, V261, H262, Q303, and E317. Residues 154–346 (ASALKDINIP…LAYTAAKIGL (193 aa)) form the ATP-grasp 1 domain. Residues Q303, E317, and N319 each coordinate Mg(2+). Positions 303, 317, and 319 each coordinate Mn(2+). Residues 421–573 (PSLLGFQGST…YTTYNATKND (153 aa)) form an oligomerization domain region. Positions 574–958 (VEFNENGMLV…SYWTAIQSTM (385 aa)) are carbamoyl phosphate synthetic domain. The ATP-grasp 2 domain maps to 698–890 (SSILDSIDVD…FIEIAVKAFL (193 aa)). ATP is bound by residues R734, K773, I775, E780, G805, V806, H807, S808, Q848, and E861. Residues Q848, E861, and N863 each contribute to the Mg(2+) site. Residues Q848, E861, and N863 each coordinate Mn(2+). Residues 959-1102 (NFHVPLPPSG…KILESHDVIV (144 aa)) form an allosteric domain region. Residues 960–1118 (FHVPLPPSGI…WDEFIGFKAY (159 aa)) enclose the MGS-like domain.

This sequence belongs to the CarB family. In terms of assembly, heterodimer composed of 2 chains; the small (or glutamine) chain promotes the hydrolysis of glutamine to ammonia, which is used by the large (or ammonia) chain to synthesize carbamoyl phosphate. The cofactor is Mg(2+). It depends on Mn(2+) as a cofactor.

The protein resides in the cytoplasm. The enzyme catalyses hydrogencarbonate + L-glutamine + 2 ATP + H2O = carbamoyl phosphate + L-glutamate + 2 ADP + phosphate + 2 H(+). It catalyses the reaction hydrogencarbonate + NH4(+) + 2 ATP = carbamoyl phosphate + 2 ADP + phosphate + 2 H(+). Its pathway is amino-acid biosynthesis; L-arginine biosynthesis; carbamoyl phosphate from bicarbonate: step 1/1. Its function is as follows. Large subunit of the arginine-specific carbamoyl phosphate synthase (CPSase). CPSase catalyzes the formation of carbamoyl phosphate from the ammonia moiety of glutamine, hydrogencarbonate, and phosphate donated by ATP, constituting the first step of 2 biosynthetic pathways, one leading to arginine and/or urea and the other to pyrimidine nucleotides. The large subunit (synthetase) binds the substrates ammonia (free or transferred from glutamine from the small subunit), hydrogencarbonate and ATP and carries out an ATP-coupled ligase reaction, activating hydrogencarbonate by forming carboxy phosphate which reacts with ammonia to form carbamoyl phosphate. In Saccharomyces cerevisiae (strain ATCC 204508 / S288c) (Baker's yeast), this protein is Carbamoyl phosphate synthase arginine-specific large chain (CPA2).